Consider the following 252-residue polypeptide: Imidazole glycerol phosphate synthase subunit HisF (252 aa).

Residues Asp-11 and Asp-130 contribute to the active site.

The protein belongs to the HisA/HisF family. As to quaternary structure, heterodimer of HisH and HisF.

It localises to the cytoplasm. The catalysed reaction is 5-[(5-phospho-1-deoxy-D-ribulos-1-ylimino)methylamino]-1-(5-phospho-beta-D-ribosyl)imidazole-4-carboxamide + L-glutamine = D-erythro-1-(imidazol-4-yl)glycerol 3-phosphate + 5-amino-1-(5-phospho-beta-D-ribosyl)imidazole-4-carboxamide + L-glutamate + H(+). Its pathway is amino-acid biosynthesis; L-histidine biosynthesis; L-histidine from 5-phospho-alpha-D-ribose 1-diphosphate: step 5/9. Functionally, IGPS catalyzes the conversion of PRFAR and glutamine to IGP, AICAR and glutamate. The HisF subunit catalyzes the cyclization activity that produces IGP and AICAR from PRFAR using the ammonia provided by the HisH subunit. The chain is Imidazole glycerol phosphate synthase subunit HisF from Desulforamulus reducens (strain ATCC BAA-1160 / DSM 100696 / MI-1) (Desulfotomaculum reducens).